The sequence spans 50 residues: U3-ctenitoxin-Asp1a (50 aa).

In terms of tissue distribution, expressed by the venom gland.

Its subcellular location is the secreted. Its function is as follows. Possible neurotoxin. This Ancylometes sp. (South American fishing spider) protein is U3-ctenitoxin-Asp1a.